Here is a 266-residue protein sequence, read N- to C-terminus: ATP synthase subunit a (266 aa).

6 helical membrane passes run 38-58 (KQML…ILAA), 99-119 (LLFS…IPVI), 126-146 (HVGG…IIGI), 162-182 (GVPW…NFLV), 191-211 (LFAT…GIEF), and 224-244 (SVLV…IMAL).

This sequence belongs to the ATPase A chain family. F-type ATPases have 2 components, CF(1) - the catalytic core - and CF(0) - the membrane proton channel. CF(1) has five subunits: alpha(3), beta(3), gamma(1), delta(1), epsilon(1). CF(0) has three main subunits: a(1), b(2) and c(9-12). The alpha and beta chains form an alternating ring which encloses part of the gamma chain. CF(1) is attached to CF(0) by a central stalk formed by the gamma and epsilon chains, while a peripheral stalk is formed by the delta and b chains.

It localises to the cell membrane. Key component of the proton channel; it plays a direct role in the translocation of protons across the membrane. The chain is ATP synthase subunit a from Paenarthrobacter aurescens (strain TC1).